A 354-amino-acid polypeptide reads, in one-letter code: MAAGGGQAFAWQVFPPMPTCRVYGTVAHQDGHLLVLGGCGRAGLPLDTAETLDMASHTWLALAPLPTARAGAAAVVLGKQVLVVGGVDEVQSPVAAVEAFLADEGRWERRATLPQAAMGVATVERDGMVYALGGMGPDTAPQAQVLVYESRRDRWLSLPSMPTPCYGASTFLHGNKIYVLGGRQGKLPVTAFEAFDLETRTWTRHPSLPSRRAFAGCAMAEGSVFSLGGLQQPGPHNFYSRPHFVNTVEMFDLEHGSWTKLPRSLRMRDKRADFVVGSLGGNIVAIGGLGNQPCPLASVESFSLARRRWEALPAMPTARCSCSSLQAGPRLFVIGGVAQGPSQAVEALCLRDGV.

Kelch repeat units lie at residues 1-31 (MAAGGGQAFAWQVFPPMPTCRVYGTVAHQDG), 32-79 (HLLV…VLGK), 81-127 (VLVV…ERDG), 128-175 (MVYA…LHGN), 176-222 (KIYV…MAEG), 224-281 (VFSL…SLGG), 282-329 (NIVA…QAGP), and 331-354 (LFVIGGVAQGPSQAVEALCLRDGV).

It localises to the cytoplasm. It is found in the midbody. Involved in pinching off the separated nuclei at the cleavage furrow and in cytokinesis. Required for mitotic integrity and maintenance of chromosomal stability. Protects cells against mitotic errors, centrosomal amplification, micronucleus formation and aneuploidy. Plays a key role of midbody function involving abscission of the daughter cells during cytokinesis and appropriate chromosomal and nuclear segregation into the daughter cells. In Rattus norvegicus (Rat), this protein is Kelch domain-containing protein 8B (Klhdc8b).